A 311-amino-acid chain; its full sequence is Porphobilinogen deaminase (311 aa).

Cys-243 is modified (S-(dipyrrolylmethanemethyl)cysteine).

This sequence belongs to the HMBS family. In terms of assembly, monomer. The cofactor is dipyrromethane.

It carries out the reaction 4 porphobilinogen + H2O = hydroxymethylbilane + 4 NH4(+). It functions in the pathway porphyrin-containing compound metabolism; protoporphyrin-IX biosynthesis; coproporphyrinogen-III from 5-aminolevulinate: step 2/4. Tetrapolymerization of the monopyrrole PBG into the hydroxymethylbilane pre-uroporphyrinogen in several discrete steps. The polypeptide is Porphobilinogen deaminase (Aliivibrio fischeri (strain ATCC 700601 / ES114) (Vibrio fischeri)).